Reading from the N-terminus, the 505-residue chain is Nicotinamide phosphoribosyltransferase (505 aa).

Arg196 is a diphosphate binding site. Beta-nicotinamide D-ribonucleotide is bound at residue Asp219. Positions 246 and 314 each coordinate diphosphate. Beta-nicotinamide D-ribonucleotide-binding positions include 314-316, 369-370, and Arg408; these read RPD and GD.

Belongs to the NAPRTase family.

It carries out the reaction beta-nicotinamide D-ribonucleotide + diphosphate = 5-phospho-alpha-D-ribose 1-diphosphate + nicotinamide + H(+). The protein operates within cofactor biosynthesis; NAD(+) biosynthesis; nicotinamide D-ribonucleotide from 5-phospho-alpha-D-ribose 1-diphosphate and nicotinamide: step 1/1. 10-fold more active in the presence of saturating ATP. Its function is as follows. Catalyzes the condensation of nicotinamide with 5-phosphoribosyl-1-pyrophosphate to yield nicotinamide mononucleotide, an intermediate in the biosynthesis of NAD. Functions in the nondeamidating salvage pathway for production of NAD from nicotinamide. Displays a strict preference for nicotinamide over nicotinate substrate. The sequence is that of Nicotinamide phosphoribosyltransferase from Acinetobacter baylyi (strain ATCC 33305 / BD413 / ADP1).